Reading from the N-terminus, the 391-residue chain is BRCA1-A complex subunit Abraxas 1 (391 aa).

Residues 8–156 (VRISGFVLSS…THRLEFSAFI (149 aa)) form the MPN domain. Positions 223 to 261 (LLAEMQKVCVEVEKSERTVEKLQEDIAQLKEAIGKQKTH) form a coiled coil. Positions 354-391 (QRLKRKRKTREVSESASESGSDTEIEMNGQSGSNSPVF) are disordered. Positions 367-391 (ESASESGSDTEIEMNGQSGSNSPVF) are enriched in polar residues. At Ser388 the chain carries Phosphoserine. Positions 388 to 391 (SPVF) match the pSXXF motif motif.

It belongs to the FAM175 family. Abraxas subfamily. As to quaternary structure, component of the ARISC complex. Component of the BRCA1-A complex. Homodimer. Phosphorylation of Ser-388 of the pSXXF motif by ATM or ATR constitutes a specific recognition motif for the BRCT domain of BRCA1.

It is found in the nucleus. In terms of biological role, involved in DNA damage response and double-strand break (DSB) repair. Component of the BRCA1-A complex, acting as a central scaffold protein that assembles the various components of the complex. The BRCA1-A complex specifically recognizes 'Lys-63'-linked ubiquitinated histones H2A and H2AX at DNA lesion sites. This complex also possesses deubiquitinase activity that specifically removes 'Lys-63'-linked ubiquitin on histones H2A and H2AX. This Danio rerio (Zebrafish) protein is BRCA1-A complex subunit Abraxas 1.